Reading from the N-terminus, the 253-residue chain is Geranylgeranylglyceryl phosphate synthase (253 aa).

D23 and S52 together coordinate Mg(2+). Sn-glycerol 1-phosphate contacts are provided by residues 171–177, 202–203, and 224–225; these read YFEAGSG, GG, and GT.

It belongs to the GGGP/HepGP synthase family. Group II subfamily. As to quaternary structure, homodimer. It depends on Mg(2+) as a cofactor.

The protein localises to the cytoplasm. It catalyses the reaction sn-glycerol 1-phosphate + (2E,6E,10E)-geranylgeranyl diphosphate = sn-3-O-(geranylgeranyl)glycerol 1-phosphate + diphosphate. Its pathway is membrane lipid metabolism; glycerophospholipid metabolism. With respect to regulation, inhibited by high concentrations of magnesium (&gt;10 mM) and by EDTA in vitro. Functionally, prenyltransferase that catalyzes the transfer of the geranylgeranyl moiety of geranylgeranyl diphosphate (GGPP) to the C3 hydroxyl of sn-glycerol-1-phosphate (G1P). This reaction is the first ether-bond-formation step in the biosynthesis of archaeal membrane lipids. Cannot use sn-glycerol-3-phosphate (G3P) as substrate. The sequence is that of Geranylgeranylglyceryl phosphate synthase from Thermoplasma acidophilum (strain ATCC 25905 / DSM 1728 / JCM 9062 / NBRC 15155 / AMRC-C165).